The primary structure comprises 81 residues: Photosystem I iron-sulfur center (81 aa).

2 consecutive 4Fe-4S ferredoxin-type domains span residues 2–31 and 39–68; these read AHSV…MIPW and IASA…VRVY. [4Fe-4S] cluster-binding residues include Cys11, Cys14, Cys17, Cys21, Cys48, Cys51, Cys54, and Cys58.

As to quaternary structure, the eukaryotic PSI reaction center is composed of at least 11 subunits. [4Fe-4S] cluster is required as a cofactor.

It is found in the plastid. The protein localises to the chloroplast thylakoid membrane. The enzyme catalyses reduced [plastocyanin] + hnu + oxidized [2Fe-2S]-[ferredoxin] = oxidized [plastocyanin] + reduced [2Fe-2S]-[ferredoxin]. Its function is as follows. Apoprotein for the two 4Fe-4S centers FA and FB of photosystem I (PSI); essential for photochemical activity. FB is the terminal electron acceptor of PSI, donating electrons to ferredoxin. The C-terminus interacts with PsaA/B/D and helps assemble the protein into the PSI complex. Required for binding of PsaD and PsaE to PSI. PSI is a plastocyanin-ferredoxin oxidoreductase, converting photonic excitation into a charge separation, which transfers an electron from the donor P700 chlorophyll pair to the spectroscopically characterized acceptors A0, A1, FX, FA and FB in turn. In Pinus thunbergii (Japanese black pine), this protein is Photosystem I iron-sulfur center.